Consider the following 106-residue polypeptide: NADH dehydrogenase [ubiquinone] 1 beta subcomplex subunit 10-B (106 aa).

Positions Met1 to Lys25 are disordered.

Belongs to the complex I NDUFB10 subunit family. As to quaternary structure, complex I is composed of at least 49 different subunits.

The protein localises to the mitochondrion inner membrane. Accessory subunit of the mitochondrial membrane respiratory chain NADH dehydrogenase (Complex I), that is believed not to be involved in catalysis. Complex I functions in the transfer of electrons from NADH to the respiratory chain. The immediate electron acceptor for the enzyme is believed to be ubiquinone. The chain is NADH dehydrogenase [ubiquinone] 1 beta subcomplex subunit 10-B from Arabidopsis thaliana (Mouse-ear cress).